The primary structure comprises 727 residues: NADH-ubiquinone oxidoreductase 75 kDa subunit, mitochondrial (727 aa).

Residues 1-23 constitute a mitochondrion transit peptide; sequence MLRIPVKRALIGLSKSPKGYVRS. Residues 30–108 form the 2Fe-2S ferredoxin-type domain; sequence NLIEVFVDGQ…GWNILTNSEK (79 aa). Positions 64, 75, and 78 each coordinate [2Fe-2S] cluster. K84 carries the N6-acetyllysine modification. C92 serves as a coordination point for [2Fe-2S] cluster. Residues 108-147 form the 4Fe-4S His(Cys)3-ligated-type domain; that stretch reads KSKKAREGVMEFLLANHPLDCPICDQGGECDLQDQSMMFG. H124, C128, C131, C137, C176, C179, C182, and C226 together coordinate [4Fe-4S] cluster. The region spanning 245–301 is the 4Fe-4S Mo/W bis-MGD-type domain; the sequence is TRKTESIDVMDAVGSNIVVSTRTGEVMRILPRMHEDINEEWISDKTRFAYDGLKRQR. An N6-acetyllysine mark is found at K499 and K709.

It belongs to the complex I 75 kDa subunit family. In terms of assembly, core subunit of respiratory chain NADH dehydrogenase (Complex I) which is composed of 45 different subunits. This is the largest subunit of complex I and it is a component of the iron-sulfur (IP) fragment of the enzyme. Complex I associates with ubiquinol-cytochrome reductase complex (Complex III) to form supercomplexes. Interacts with MDM2 and AKAP1. Requires [2Fe-2S] cluster as cofactor. It depends on [4Fe-4S] cluster as a cofactor.

It is found in the mitochondrion inner membrane. It carries out the reaction a ubiquinone + NADH + 5 H(+)(in) = a ubiquinol + NAD(+) + 4 H(+)(out). Its function is as follows. Core subunit of the mitochondrial membrane respiratory chain NADH dehydrogenase (Complex I) which catalyzes electron transfer from NADH through the respiratory chain, using ubiquinone as an electron acceptor. Essential for catalysing the entry and efficient transfer of electrons within complex I. Plays a key role in the assembly and stability of complex I and participates in the association of complex I with ubiquinol-cytochrome reductase complex (Complex III) to form supercomplexes. The polypeptide is NADH-ubiquinone oxidoreductase 75 kDa subunit, mitochondrial (Ndufs1) (Rattus norvegicus (Rat)).